The chain runs to 98 residues: Gibberellin-regulated protein 1 (98 aa).

Residues Met-1–Ala-23 form the signal peptide.

This sequence belongs to the GASA family. Post-translationally, six disulfide bonds may be present. As to expression, expressed in flower buds, style, stamen filaments, vasculature of sepals, flower abscission zone and green siliques. Lower levels seen in the root phloem, cotyledons and vasculature of rosette leaves.

Its subcellular location is the secreted. Its function is as follows. Gibberellin-regulated protein that may function in hormonal controlled steps of development such as seed germination, flowering and seed maturation. The polypeptide is Gibberellin-regulated protein 1 (GASA1) (Arabidopsis thaliana (Mouse-ear cress)).